The primary structure comprises 350 residues: Putative deoxyribonuclease-2 (350 aa).

The protein belongs to the DNase II family.

The sequence is that of Putative deoxyribonuclease-2 from Burkholderia pseudomallei (strain 1710b).